The chain runs to 441 residues: CBL-interacting serine/threonine-protein kinase 3 (441 aa).

Residues 14–269 form the Protein kinase domain; it reads YEVGRTIGEG…PQEVFEDEWF (256 aa). Residues 20–28 and Lys43 contribute to the ATP site; that span reads IGEGTFAKV. The active-site Proton acceptor is Asp137. The activation loop stretch occupies residues 155-184; the sequence is DFGLSALSQQVRDDGLLHTSCGTPNYVAPE. Positions 307–331 constitute an NAF domain; that stretch reads EQPAAINAFEIISMSRGLNLENLFD. Residues 337–366 are PPI; sequence KRETRITLRGGANEIIEKIEEAAKPLGFDV.

The protein belongs to the protein kinase superfamily. CAMK Ser/Thr protein kinase family. SNF1 subfamily. Interacts with CBL3 and CBL9. Mn(2+) is required as a cofactor. Mostly expressed in germinating seeds and young seedlings. Detected at low levels in roots, stems, leaves and flowers.

It carries out the reaction L-seryl-[protein] + ATP = O-phospho-L-seryl-[protein] + ADP + H(+). The enzyme catalyses L-threonyl-[protein] + ATP = O-phospho-L-threonyl-[protein] + ADP + H(+). Involved in the resistance to some abiotic stresses (e.g. high salt, hyperosmotic stress) in young seedlings, by regulating the expression of several stress-inducible genes (cold- and salt-induced genes but not drought-responsive genes). Required for the ABA response during germination. CIPK serine-threonine protein kinases interact with CBL proteins. Binding of a CBL protein to the regulatory NAF domain of CIPK protein lead to the activation of the kinase in a calcium-dependent manner. The CBL9/CIPK3 complex acts in the regulation of abscisic acid response in seed germination. This chain is CBL-interacting serine/threonine-protein kinase 3 (CIPK3), found in Arabidopsis thaliana (Mouse-ear cress).